Here is a 167-residue protein sequence, read N- to C-terminus: Peptide deformylase (167 aa).

2 residues coordinate Fe cation: cysteine 91 and histidine 133. Glutamate 134 is a catalytic residue. A Fe cation-binding site is contributed by histidine 137.

This sequence belongs to the polypeptide deformylase family. It depends on Fe(2+) as a cofactor.

The enzyme catalyses N-terminal N-formyl-L-methionyl-[peptide] + H2O = N-terminal L-methionyl-[peptide] + formate. Removes the formyl group from the N-terminal Met of newly synthesized proteins. Requires at least a dipeptide for an efficient rate of reaction. N-terminal L-methionine is a prerequisite for activity but the enzyme has broad specificity at other positions. The chain is Peptide deformylase from Chromobacterium violaceum (strain ATCC 12472 / DSM 30191 / JCM 1249 / CCUG 213 / NBRC 12614 / NCIMB 9131 / NCTC 9757 / MK).